The following is a 475-amino-acid chain: Ankyrin repeat, SAM and basic leucine zipper domain-containing protein 1 (475 aa).

The tract at residues 1 to 25 is disordered; sequence MAAGALRGLPVAGGGESSESEDDGW. 3 positions are modified to phosphoserine: S17, S18, and S20. ANK repeat units follow at residues 45 to 74, 78 to 107, 110 to 144, 148 to 177, 181 to 210, and 214 to 243; these read EKKEKFKKAMTIGDVSLVQELLDSGISVDS, YGWTPLMYAASVANAELVRVLLDRGANASF, DKQSILITACSARGSEEQILKCVELLLSRNADPNV, RLMTPIMYAARDGHTQVVALLVAHGAEVNT, NGYTALTWAARQGHKNIVLKLLELGANKML, and DGKMPSEIAKRNKHHEIFNLLSFTLNPLEG. Residues 272–334 form the SAM domain; that stretch reads SYTAFGDLEV…KILAALKELQ (63 aa).

In terms of assembly, interacts with DDX4, PIWIL1, RANBP9 and TDRD1.

The protein localises to the cytoplasm. Plays a central role during spermatogenesis by repressing transposable elements and preventing their mobilization, which is essential for the germline integrity. Acts via the piRNA metabolic process, which mediates the repression of transposable elements during meiosis by forming complexes composed of piRNAs and Piwi proteins and governs the methylation and subsequent repression of transposons. Its association with pi-bodies suggests a participation in the primary piRNAs metabolic process. Required prior to the pachytene stage to facilitate the production of multiple types of piRNAs, including those associated with repeats involved in the regulation of retrotransposons. May act by mediating protein-protein interactions during germ cell maturation. This chain is Ankyrin repeat, SAM and basic leucine zipper domain-containing protein 1 (ASZ1), found in Pongo abelii (Sumatran orangutan).